Here is a 117-residue protein sequence, read N- to C-terminus: Minor capsid protein p17 (117 aa).

Asn12 carries an N-linked (GlcNAc...) asparagine; by host glycan. A helical membrane pass occupies residues 39 to 59; it reads AILLGILILLVIILIIVAIVY. N-linked (GlcNAc...) asparagine; by host glycans are attached at residues Asn61 and Asn97.

The protein belongs to the asfivirus minor capsid protein p17 family. Interacts with the minor capsid protein M1249L and with the hexon capsid protein p72 capsomers; these interactions form a rigid zipper structure that stabilizes the capsomers. Interacts with host STING1.

It is found in the virion membrane. Its subcellular location is the host endoplasmic reticulum membrane. The protein localises to the host Golgi apparatus membrane. Its function is as follows. Together with the penton and the other minor capsid proteins (M1249L, p49), forms a complicated network immediately below the outer capsid shell, stabilizing the whole capsid. Three copies of p17 encircle each p72 capsomer in the inner capsid shell, anchoring p72 capsomers on the inner membrane. Required for the assembly of the capsid and icosahedral morphogenesis. Additionally, inhibits the host cGAS-STING pathway through its interaction with STING1 and subsequent interference of the recruitment of downstream components TBK1 and IKBKE. The polypeptide is Minor capsid protein p17 (African swine fever virus (strain Badajoz 1971 Vero-adapted) (Ba71V)).